Reading from the N-terminus, the 102-residue chain is Small ribosomal subunit protein uS10 (102 aa).

The protein belongs to the universal ribosomal protein uS10 family. Part of the 30S ribosomal subunit.

In terms of biological role, involved in the binding of tRNA to the ribosomes. This Leptospira borgpetersenii serovar Hardjo-bovis (strain JB197) protein is Small ribosomal subunit protein uS10.